An 873-amino-acid chain; its full sequence is MFWKFDLHSSSHIDTLLEREDVTLKELMDEEDVLQECKAQNRKLIEFLLKSECLEDLVSFIIEEPPQDMDEKIRYKYPNISCELLTSDVSQINDRLGEEESLLMKLYSFLLNESPLNPLLASFFSKVLSILISRKPEQIVDFLKKKHDFVDLVIKHIGTSAIMDLLLRLLTCIEPPQPRQEVLNWLNEERIIQRLVEIVHPSQDEDRHSNASQSLCEIIRLSRDQMLQVQNSSEPDPLLASLEKREIIEQLLSNIFHKEKNESAIVSAIQILLTLLETRRQTFEGHIEICPPGMSNSTYSVNKSVLEAIKARLSSFHELLLEPPKKSVMKTTWGVLDPPVGNTRLNVIRLISSLLQTNTSSVNQELIELNSIGVILDMFFKYTWNNFLHTQVEICIALILASPLESTENGTITDQDSTGDNLLLKHLFLKCQLIERILEAWEMNEKKQAEGGRRHGYMGHLTRIANCIVHSTDKGPNSTLVQQLIKELPEEVRERWETFCTSSLGETNKRNTVDLVTTCHIHSSSDDEIDFKETGFSQDSSLQQAFSDYQMQQMTSNFIDQFGFNDEKFADQDDIGNVSFDRVSDINFTLNTNESGNIALFEACCKERIQQFDDGGSDEEDIWEEKHIAFTPESQRRSSSGSTDSEESTDSEEEDGTKQDLFESHANTEDKMEVDLNEPPNWSANFDVPMETAHGTNLDSVGSDVWSTEEPMPAKETGWASFSEFTSSLSSTDSLRSNSPVEMETNTEPMDPLSANATGLATQLETPGSVAMEASSDGEEDAENADKVTETVMNGSMKETLSLTVDAKTETAVFKSEEGKLSTSQDASCKYVVEENAEVAEEAPSALQPANSSPEQRTDQRTLLGETSVNGPV.

5 disordered regions span residues 628 to 659 (IAFT…GTKQ), 693 to 715 (AHGT…MPAK), 729 to 755 (LSST…PLSA), 767 to 787 (PGSV…NADK), and 840 to 873 (AEEA…NGPV). Acidic residues predominate over residues 644-655 (DSEESTDSEEED). Positions 729–739 (LSSTDSLRSNS) are enriched in low complexity.

The protein belongs to the SAPS family. In terms of assembly, protein phosphatase 6 (PP6) holoenzyme is proposed to be a heterotrimeric complex formed by the catalytic subunit, a SAPS domain-containing subunit (PP6R) and an ankyrin repeat-domain containing regulatory subunit (ARS).

Functionally, regulatory subunit of protein phosphatase 6 (PP6). May function as a scaffolding PP6 subunit. This chain is Serine/threonine-protein phosphatase 6 regulatory subunit 3 (PPP6R3), found in Gallus gallus (Chicken).